The sequence spans 409 residues: Elongation factor Tu (409 aa).

In terms of domain architecture, tr-type G spans 10-214; the sequence is KPHVNVGTIG…AVDSYIPTPE (205 aa). The interval 19 to 26 is G1; it reads GHVDHGKT. GTP is bound at residue 19–26; sequence GHVDHGKT. Threonine 26 is a Mg(2+) binding site. A G2 region spans residues 60–64; the sequence is GITIN. Residues 81–84 are G3; the sequence is DCPG. Residues 81-85 and 136-139 contribute to the GTP site; these read DCPGH and NKVD. A G4 region spans residues 136–139; it reads NKVD. Positions 174-176 are G5; sequence SAL.

It belongs to the TRAFAC class translation factor GTPase superfamily. Classic translation factor GTPase family. EF-Tu/EF-1A subfamily. Monomer.

The protein resides in the cytoplasm. The enzyme catalyses GTP + H2O = GDP + phosphate + H(+). In terms of biological role, GTP hydrolase that promotes the GTP-dependent binding of aminoacyl-tRNA to the A-site of ribosomes during protein biosynthesis. The protein is Elongation factor Tu of Synechococcus sp. (strain JA-3-3Ab) (Cyanobacteria bacterium Yellowstone A-Prime).